Consider the following 63-residue polypeptide: Alpha-conotoxin-like PuSG1.1 (63 aa).

The signal sequence occupies residues 1–21 (MRCLAFLVVTLLLFTATATTG). A propeptide spanning residues 22–43 (ASNGMNAAASGEAPDSISLAVR) is cleaved from the precursor. 2 cysteine pairs are disulfide-bonded: C46–C52 and C47–C60. The lacks the Ser-Xaa-Pro motif that is crucial for potent interaction with nAChR stretch occupies residues 48–50 (PDP).

The protein belongs to the conotoxin A superfamily. In terms of tissue distribution, expressed by the salivary gland.

The protein localises to the secreted. Functionally, alpha-conopeptides-like may act on postsynaptic membranes, they bind to the nicotinic acetylcholine receptors (nAChR) and thus inhibit them. Has possibly a distinct nAChR binding mode from other alpha-conotoxins, due to a different three residue motif (lacks the Ser-Xaa-Pro motif). In Conus pulicarius (Flea-bitten cone), this protein is Alpha-conotoxin-like PuSG1.1.